The primary structure comprises 351 residues: Phospho-N-acetylmuramoyl-pentapeptide-transferase (351 aa).

Helical transmembrane passes span 17-37 (TAYATIFAFLLALIFGPFIIL), 63-83 (IPTMGGILIFFCVLVSLFFWI), 85-105 (FWNIYFLIILFVMVSFACLGF), 124-144 (FKIYGQILFSCISVTMLYYFG), 158-178 (SLKLDLGVLYIPFGMFILISA), 190-210 (GLAIGLSIVVTGALVIIAYLA), 230-250 (LVVFLGALLGGSFGFLWFNAY), 254-274 (IMMGDTGSLSIGAVLGMTALI), 279-299 (ILFAILAGVFVVETLSVIIQV), and 328-348 (QVVIRFWIIGLIFAIIALSTL).

The protein belongs to the glycosyltransferase 4 family. MraY subfamily. Requires Mg(2+) as cofactor.

The protein resides in the cell inner membrane. The catalysed reaction is UDP-N-acetyl-alpha-D-muramoyl-L-alanyl-gamma-D-glutamyl-meso-2,6-diaminopimeloyl-D-alanyl-D-alanine + di-trans,octa-cis-undecaprenyl phosphate = di-trans,octa-cis-undecaprenyl diphospho-N-acetyl-alpha-D-muramoyl-L-alanyl-D-glutamyl-meso-2,6-diaminopimeloyl-D-alanyl-D-alanine + UMP. It functions in the pathway cell wall biogenesis; peptidoglycan biosynthesis. In terms of biological role, catalyzes the initial step of the lipid cycle reactions in the biosynthesis of the cell wall peptidoglycan: transfers peptidoglycan precursor phospho-MurNAc-pentapeptide from UDP-MurNAc-pentapeptide onto the lipid carrier undecaprenyl phosphate, yielding undecaprenyl-pyrophosphoryl-MurNAc-pentapeptide, known as lipid I. This Borrelia turicatae (strain 91E135) protein is Phospho-N-acetylmuramoyl-pentapeptide-transferase.